The primary structure comprises 208 residues: MVNKRIETLLAQLRQQGIQDERLLKAIEAVPRERFVDEAFEHKAYENTALPIGSGQTISQPYMVAKMTELLSLTPVSRVLEIGTGSGYQTAILAHLVQHVCSVERIKGLQWQAKRRLKQLDLHNVSTRHGDGWQGWASRGPFDAIIVTAAPPEIPRALLEQLDEGGVMVLPVGEQSQILQVVQRHAGEFIIQTVEAVRFVPLVKGELA.

Ser-59 is an active-site residue.

The protein belongs to the methyltransferase superfamily. L-isoaspartyl/D-aspartyl protein methyltransferase family.

It localises to the cytoplasm. The catalysed reaction is [protein]-L-isoaspartate + S-adenosyl-L-methionine = [protein]-L-isoaspartate alpha-methyl ester + S-adenosyl-L-homocysteine. Its function is as follows. Catalyzes the methyl esterification of L-isoaspartyl residues in peptides and proteins that result from spontaneous decomposition of normal L-aspartyl and L-asparaginyl residues. It plays a role in the repair and/or degradation of damaged proteins. This Pectobacterium carotovorum subsp. carotovorum (strain PC1) protein is Protein-L-isoaspartate O-methyltransferase.